We begin with the raw amino-acid sequence, 557 residues long: Urocanate hydratase (557 aa).

Residues 53-54 (GG), Q131, 177-179 (GMG), E197, R202, 243-244 (NA), 264-268 (QTSAH), 274-275 (YL), and Y323 contribute to the NAD(+) site. The active site involves C411. The disordered stretch occupies residues 445–464 (LDSGSVSSPNRETESMRDGS). Over residues 455-464 (RETESMRDGS) the composition is skewed to basic and acidic residues. G493 provides a ligand contact to NAD(+).

Belongs to the urocanase family. NAD(+) is required as a cofactor.

It is found in the cytoplasm. It carries out the reaction 4-imidazolone-5-propanoate = trans-urocanate + H2O. It functions in the pathway amino-acid degradation; L-histidine degradation into L-glutamate; N-formimidoyl-L-glutamate from L-histidine: step 2/3. Catalyzes the conversion of urocanate to 4-imidazolone-5-propionate. The sequence is that of Urocanate hydratase from Pseudomonas putida (strain W619).